Reading from the N-terminus, the 414-residue chain is Ankyrin repeat domain-containing protein 10 (414 aa).

ANK repeat units follow at residues 18 to 47, 54 to 83, 88 to 117, 121 to 150, and 154 to 187; these read TLRFPLHRACRDGDLPALCALLQSAPRSDL, YGWTPIHWAAHFGKLECLMQLVRAGASVNA, FAQTPAHIAAFGGHPQCLNWLIQVGANINK, VGETPIHKAARSGSVDSISALVAHGAQIDL, and SGLTAADLAHTQGFQECAQFLLNLQNCHLNRYYS. Residues 310 to 332 are disordered; sequence GVTSPSRHRIHTSNGTEEPEKAM.

This Gallus gallus (Chicken) protein is Ankyrin repeat domain-containing protein 10 (ANKRD10).